The sequence spans 262 residues: Hydroxyethylthiazole kinase (262 aa).

Substrate is bound at residue methionine 50. Positions 125 and 171 each coordinate ATP. Glycine 198 is a binding site for substrate.

This sequence belongs to the Thz kinase family. Requires Mg(2+) as cofactor.

It catalyses the reaction 5-(2-hydroxyethyl)-4-methylthiazole + ATP = 4-methyl-5-(2-phosphooxyethyl)-thiazole + ADP + H(+). It participates in cofactor biosynthesis; thiamine diphosphate biosynthesis; 4-methyl-5-(2-phosphoethyl)-thiazole from 5-(2-hydroxyethyl)-4-methylthiazole: step 1/1. Catalyzes the phosphorylation of the hydroxyl group of 4-methyl-5-beta-hydroxyethylthiazole (THZ). The protein is Hydroxyethylthiazole kinase of Shigella boydii serotype 18 (strain CDC 3083-94 / BS512).